The primary structure comprises 586 residues: ATP-dependent RNA helicase DBP9 (586 aa).

Positions 21–49 match the Q motif motif; the sequence is TTWESFGLDARLLQAIDQLGFENPTLIQS. Positions 53–234 constitute a Helicase ATP-binding domain; sequence PLAIEEKRDI…SKFCSRPAIL (182 aa). 66-73 contacts ATP; it reads ASTGSGKT. The DEAD box signature appears at 180-183; the sequence is DEVD. The 223-residue stretch at 245–467 folds into the Helicase C-terminal domain; sequence NLVQYYAKTT…EIKPYQFDMK (223 aa). The span at 339–349 shows a compositional bias: acidic residues; sequence EDEKDEGEEIE. 2 disordered regions span residues 339-375 and 560-586; these read EDEKDEGEEIEENKNEENDGKTSKNTKKPNQKKDKEY and HKNKVHKNRKRKPSGRKPDPLKSFRPK. The span at 350–360 shows a compositional bias: basic and acidic residues; sequence ENKNEENDGKT. The segment covering 560–574 has biased composition (basic residues); the sequence is HKNKVHKNRKRKPSG. The span at 575–586 shows a compositional bias: basic and acidic residues; that stretch reads RKPDPLKSFRPK.

The protein belongs to the DEAD box helicase family. DDX56/DBP9 subfamily.

It localises to the nucleus. The protein resides in the nucleolus. It catalyses the reaction ATP + H2O = ADP + phosphate + H(+). Functionally, ATP-binding RNA helicase involved in the biogenesis of 60S ribosomal subunits and is required for the normal formation of 25S and 5.8S rRNAs. This is ATP-dependent RNA helicase DBP9 (DBP9) from Debaryomyces hansenii (strain ATCC 36239 / CBS 767 / BCRC 21394 / JCM 1990 / NBRC 0083 / IGC 2968) (Yeast).